The sequence spans 1004 residues: Glutamate [NMDA] receptor subunit 1 (1004 aa).

An N-terminal signal peptide occupies residues 1–39 (MAGTDSPAAARFVYRCLLFAPAIVVGLLLPLTLPPIAAA). Residues 40-585 (QRHTASDNPS…TLVSFLQPFS (546 aa)) lie on the Extracellular side of the membrane. N-linked (GlcNAc...) asparagine glycosylation is found at Asn-270, Asn-326, Asn-357, Asn-409, Asn-466, Asn-493, and Asn-513. Glycine is bound by residues 542-544 (PLT) and Arg-549. A helical transmembrane segment spans residues 586 to 606 (NTLWILVMVSVHVVALVLYLL). Over 607–663 (DRFSPFGRFKLSHSDSNEEKALNLSSAVWFAWGVLLNSGIGEGTPRSFSARVLGMVW) the chain is Cytoplasmic. Residues 664–684 (AGFAMIIVASYTANLAAFLVL) form a helical membrane-spanning segment. The Extracellular segment spans residues 685 to 843 (ERPKTKLSGI…KTPNTLGLKN (159 aa)). Asn-705 carries an N-linked (GlcNAc...) asparagine glycan. Positions 715 and 759 each coordinate glycine. The chain crosses the membrane as a helical span at residues 844–864 (MAGVFILVGVGIAGGVGLIII). Over 865 to 1004 (EVIYKKHQVK…YTSDVSHLVV (140 aa)) the chain is Cytoplasmic. The segment at 980–1004 (TRPQQNILPPRYSPGYTSDVSHLVV) is disordered. Residues 994 to 1004 (GYTSDVSHLVV) are compositionally biased toward polar residues.

It belongs to the glutamate-gated ion channel (TC 1.A.10.1) family. Forms a heteromeric NMDA channel with Nmdar2.

Its subcellular location is the cell membrane. The protein localises to the postsynaptic cell membrane. The protein resides in the postsynaptic density. NMDA receptor subtype of glutamate-gated ion channels with high calcium permeability and voltage-dependent sensitivity to magnesium. Mediated by glycine. This protein plays a key role in synaptic plasticity, synaptogenesis, excitotoxicity, memory acquisition and learning. It mediates neuronal functions in glutamate neurotransmission. Is involved in the cell surface targeting of NMDA receptors. Plays a role in associative learning and in long-term memory consolidation. The polypeptide is Glutamate [NMDA] receptor subunit 1 (Drosophila persimilis (Fruit fly)).